A 566-amino-acid polypeptide reads, in one-letter code: Protein downstream neighbor of Son (566 aa).

Residues 1–110 (MALSVPGYSP…QPEAPVPFLD (110 aa)) form a disordered region. 2 positions are modified to phosphoserine: S28 and S34. The segment covering 62–72 (GGRGGGSGGGP) has biased composition (gly residues). The span at 73–82 (AAARRNPFAR) shows a compositional bias: low complexity.

This sequence belongs to the DONSON family. Component of the replisome complex composed of at least DONSON, MCM2, MCM7, PCNA and TICRR; interaction at least with PCNA occurs during DNA replication. Expressed in the brain, with higher levels in prenatal compared to adult brain.

It is found in the nucleus. Its function is as follows. Replisome component that maintains genome stability by protecting stalled or damaged replication forks. After the induction of replication stress, required for the stabilization of stalled replication forks, the efficient activation of the intra-S-phase and G/2M cell-cycle checkpoints and the maintenance of genome stability. This is Protein downstream neighbor of Son (DONSON) from Homo sapiens (Human).